A 736-amino-acid polypeptide reads, in one-letter code: Meiotic expression up-regulated protein 27 (736 aa).

The protein belongs to the UPF0300 family.

This chain is Meiotic expression up-regulated protein 27 (meu27), found in Schizosaccharomyces pombe (strain 972 / ATCC 24843) (Fission yeast).